The sequence spans 138 residues: ATP synthase epsilon chain (138 aa).

It belongs to the ATPase epsilon chain family. F-type ATPases have 2 components, CF(1) - the catalytic core - and CF(0) - the membrane proton channel. CF(1) has five subunits: alpha(3), beta(3), gamma(1), delta(1), epsilon(1). CF(0) has three main subunits: a, b and c.

Its subcellular location is the cell membrane. Its function is as follows. Produces ATP from ADP in the presence of a proton gradient across the membrane. This is ATP synthase epsilon chain from Streptococcus gordonii (strain Challis / ATCC 35105 / BCRC 15272 / CH1 / DL1 / V288).